A 262-amino-acid polypeptide reads, in one-letter code: Serine/arginine-rich SC35-like splicing factor SCL30 (262 aa).

Residues 1-14 show a composition bias toward low complexity; the sequence is MRRYSPPYYSPPRR. Disordered stretches follow at residues 1–48 and 123–262; these read MRRY…SHGS and ASES…VSPR. Phosphoserine is present on residues Ser5, Ser10, and Ser22. A compositionally biased stretch (gly residues) spans 31–42; it reads GYGGGGGGGGRR. An RRM domain is found at 47–125; it reads GSLLVRNIPL…REITVVVASE (79 aa). Residues 125-152 show a composition bias toward basic and acidic residues; sequence ESRKRPEEMRVKTRTRSREPSGSRDRSH. Over residues 153–167 the composition is skewed to basic residues; that stretch reads GRSRSRSISRSRSPR. Ser182, Ser204, and Ser206 each carry phosphoserine. Tyr209 bears the Phosphotyrosine mark. Residues 217–239 show a composition bias toward basic and acidic residues; sequence PDRDRNGDNEIREKPGYEAEDRR. A compositionally biased stretch (low complexity) spans 243 to 262; sequence RAVSRSPSGSRSRSVEVSPR. Phosphoserine occurs at positions 254, 256, and 260.

Belongs to the splicing factor SR family. SCL subfamily. In terms of assembly, component of the spliceosome. Interacts with RS2Z33, CYP59, CYP63 and CYP95. Post-translationally, phosphorylated.

It localises to the nucleus speckle. Involved in intron recognition and spliceosome assembly. Probably active at the 5' splice sites. The polypeptide is Serine/arginine-rich SC35-like splicing factor SCL30 (SCL30) (Arabidopsis thaliana (Mouse-ear cress)).